We begin with the raw amino-acid sequence, 184 residues long: Histone H3-like centromeric protein CSE4 (184 aa).

A disordered region spans residues 54–81 (YIQPERSASSQQIHPPEHHISAHERITK). The span at 68–80 (PPEHHISAHERIT) shows a compositional bias: basic and acidic residues. The segment at 82 to 182 (ARGTRYKPTD…MQLARRIRGQ (101 aa)) is H3-like.

The protein belongs to the histone H3 family. In terms of assembly, component of centromeric nucleosomes, where DNA is wrapped around a histone octamer core. The octamer contains two molecules each of H2A, H2B, CSE4/CENPA and H4 assembled in one CSE4-H4 heterotetramer and two H2A-H2B heterodimers. Interacts with the inner kinetochore. In terms of processing, ubiquitinated. Is degraded through ubiquitin-mediated proteolysis when not protected by its association to the kinetochore.

The protein resides in the nucleus. It is found in the chromosome. Its subcellular location is the centromere. In terms of biological role, histone H3-like nucleosomal protein that is specifically found in centromeric nucleosomes. Replaces conventional H3 in the nucleosome core of centromeric chromatin that serves as an assembly site for the inner kinetochore. Required for recruitment and assembly of kinetochore proteins, mitotic progression and chromosome segregation. May serve as an epigenetic mark that propagates centromere identity through replication and cell division. In Kluyveromyces lactis (strain ATCC 8585 / CBS 2359 / DSM 70799 / NBRC 1267 / NRRL Y-1140 / WM37) (Yeast), this protein is Histone H3-like centromeric protein CSE4 (CSE4).